A 105-amino-acid chain; its full sequence is UPF0148 protein PH0795 (105 aa).

The protein belongs to the UPF0148 family.

The protein is UPF0148 protein PH0795 of Pyrococcus horikoshii (strain ATCC 700860 / DSM 12428 / JCM 9974 / NBRC 100139 / OT-3).